The primary structure comprises 326 residues: ATP synthase subunit b 2 (326 aa).

A helical transmembrane segment spans residues 2–22; the sequence is LIDWFTVVAQALNFLILVWLL. Composition is skewed to basic and acidic residues over residues 275–298 and 306–326; these read QQGRKEGRAVQNWDKAESEIRKEN and PPPEAKAKPKPEEPKPEIGSP. A disordered region spans residues 275–326; sequence QQGRKEGRAVQNWDKAESEIRKENLSPAKTEPPPEAKAKPKPEEPKPEIGSP.

The protein belongs to the ATPase B chain family. In terms of assembly, F-type ATPases have 2 components, F(1) - the catalytic core - and F(0) - the membrane proton channel. F(1) has five subunits: alpha(3), beta(3), gamma(1), delta(1), epsilon(1). F(0) has three main subunits: a(1), b(2) and c(10-14). The alpha and beta chains form an alternating ring which encloses part of the gamma chain. F(1) is attached to F(0) by a central stalk formed by the gamma and epsilon chains, while a peripheral stalk is formed by the delta and b chains.

Its subcellular location is the cell inner membrane. Functionally, f(1)F(0) ATP synthase produces ATP from ADP in the presence of a proton or sodium gradient. F-type ATPases consist of two structural domains, F(1) containing the extramembraneous catalytic core and F(0) containing the membrane proton channel, linked together by a central stalk and a peripheral stalk. During catalysis, ATP synthesis in the catalytic domain of F(1) is coupled via a rotary mechanism of the central stalk subunits to proton translocation. Component of the F(0) channel, it forms part of the peripheral stalk, linking F(1) to F(0). The polypeptide is ATP synthase subunit b 2 (Albidiferax ferrireducens (strain ATCC BAA-621 / DSM 15236 / T118) (Rhodoferax ferrireducens)).